Here is a 457-residue protein sequence, read N- to C-terminus: Argininosuccinate lyase (457 aa).

It belongs to the lyase 1 family. Argininosuccinate lyase subfamily.

It is found in the cytoplasm. It catalyses the reaction 2-(N(omega)-L-arginino)succinate = fumarate + L-arginine. The protein operates within amino-acid biosynthesis; L-arginine biosynthesis; L-arginine from L-ornithine and carbamoyl phosphate: step 3/3. The polypeptide is Argininosuccinate lyase (Haemophilus influenzae (strain 86-028NP)).